The primary structure comprises 926 residues: Translation initiation factor IF-2 (926 aa).

Disordered regions lie at residues 1–185 and 200–299; these read MTDS…EEVE and EDKA…RRRG. 2 stretches are compositionally biased toward low complexity: residues 13–24 and 70–96; these read TGKKTLTLKPTG and APAT…AAPQ. The segment covering 110-133 has biased composition (polar residues); sequence TNQYSQQRHPGQQNRPQASSQPSR. Residues 151-185 show a composition bias toward basic and acidic residues; the sequence is MDARRRALAEAQVREVEDAKRRAEEEVRRQAEEVE. Low complexity predominate over residues 211-251; sequence APEPVAEPVAPVAETPRAADPAPRAPSPAGAKPAAGAPAPS. Residues 424 to 591 form the tr-type G domain; sequence SRPPVVTIMG…AVLLQAEILD (168 aa). Residues 433-440 form a G1 region; that stretch reads GHVDHGKT. 433 to 440 contributes to the GTP binding site; it reads GHVDHGKT. A G2 region spans residues 458–462; that stretch reads GITQH. Positions 479-482 are G3; that stretch reads DTPG. GTP contacts are provided by residues 479-483 and 533-536; these read DTPGH and NKID. The G4 stretch occupies residues 533 to 536; the sequence is NKID. The segment at 569 to 571 is G5; it reads SAK.

It belongs to the TRAFAC class translation factor GTPase superfamily. Classic translation factor GTPase family. IF-2 subfamily.

The protein localises to the cytoplasm. Its function is as follows. One of the essential components for the initiation of protein synthesis. Protects formylmethionyl-tRNA from spontaneous hydrolysis and promotes its binding to the 30S ribosomal subunits. Also involved in the hydrolysis of GTP during the formation of the 70S ribosomal complex. The protein is Translation initiation factor IF-2 of Allorhizobium ampelinum (strain ATCC BAA-846 / DSM 112012 / S4) (Agrobacterium vitis (strain S4)).